Reading from the N-terminus, the 570-residue chain is Urease subunit alpha (570 aa).

Residues 131-570 (GGIDSHIHFI…LPMTQRYFLF (440 aa)) enclose the Urease domain. Histidine 136, histidine 138, and lysine 219 together coordinate Ni(2+). At lysine 219 the chain carries N6-carboxylysine. Histidine 221 is a binding site for substrate. Residues histidine 248 and histidine 274 each contribute to the Ni(2+) site. Residue histidine 322 is the Proton donor of the active site. Residue aspartate 362 participates in Ni(2+) binding.

Belongs to the metallo-dependent hydrolases superfamily. Urease alpha subunit family. In terms of assembly, heterotrimer of UreA (gamma), UreB (beta) and UreC (alpha) subunits. Three heterotrimers associate to form the active enzyme. The cofactor is Ni cation. In terms of processing, carboxylation allows a single lysine to coordinate two nickel ions.

The protein localises to the cytoplasm. The enzyme catalyses urea + 2 H2O + H(+) = hydrogencarbonate + 2 NH4(+). Its pathway is nitrogen metabolism; urea degradation; CO(2) and NH(3) from urea (urease route): step 1/1. The sequence is that of Urease subunit alpha from Trichodesmium erythraeum (strain IMS101).